Consider the following 283-residue polypeptide: ATP synthase gamma chain (283 aa).

Belongs to the ATPase gamma chain family. As to quaternary structure, F-type ATPases have 2 components, CF(1) - the catalytic core - and CF(0) - the membrane proton channel. CF(1) has five subunits: alpha(3), beta(3), gamma(1), delta(1), epsilon(1). CF(0) has three main subunits: a, b and c.

The protein localises to the cell inner membrane. In terms of biological role, produces ATP from ADP in the presence of a proton gradient across the membrane. The gamma chain is believed to be important in regulating ATPase activity and the flow of protons through the CF(0) complex. The protein is ATP synthase gamma chain of Ehrlichia ruminantium (strain Gardel).